The primary structure comprises 517 residues: 2-isopropylmalate synthase (517 aa).

Residues Val7–Val269 form the Pyruvate carboxyltransferase domain. Residues Asp16, His204, His206, and Asn240 each coordinate Mn(2+). A required for the condensation reaction. Not required to bind substrate region spans residues Leu366–Ile517. The interval Lys395–Ile517 is regulatory domain.

This sequence belongs to the alpha-IPM synthase/homocitrate synthase family. LeuA type 1 subfamily. In terms of assembly, homodimer. Remains a homodimer in the presence of L-leucine. Mn(2+) is required as a cofactor.

The protein localises to the cytoplasm. It catalyses the reaction 3-methyl-2-oxobutanoate + acetyl-CoA + H2O = (2S)-2-isopropylmalate + CoA + H(+). Its pathway is amino-acid biosynthesis; L-leucine biosynthesis; L-leucine from 3-methyl-2-oxobutanoate: step 1/4. Its activity is regulated as follows. Inhibited by 3-bromo substituents and Leu, the pathway end product. Its function is as follows. Catalyzes the condensation of the acetyl group of acetyl-CoA with 3-methyl-2-oxobutanoate (2-ketoisovalerate) to form 3-carboxy-3-hydroxy-4-methylpentanoate (2-isopropylmalate). Complements an E.coli deletion. The polypeptide is 2-isopropylmalate synthase (Neisseria meningitidis serogroup B (strain ATCC BAA-335 / MC58)).